The following is a 259-amino-acid chain: Ras-related protein Rab-34 (259 aa).

At M1 the chain carries N-acetylmethionine. The GTP site is built by S62, V63, G64, K65, T66, D78, Y81, and T84. T66 is a binding site for Mg(2+). A Switch 1 motif is present at residues 71 to 89 (RFCKDTFDKNYKATIGVDF). T84 and D107 together coordinate Mg(2+). The Switch 2 signature appears at 108-127 (TAGQERFKCIASTYYRGAQA). G110, K167, D169, and S198 together coordinate GTP. Phosphoserine occurs at positions 241 and 244. Residues C257 and C258 are each lipidated (S-geranylgeranyl cysteine).

The protein belongs to the small GTPase superfamily. Rab family. Interacts with RILP. The GTP-bound form interacts with REP15. It depends on Mg(2+) as a cofactor.

It is found in the cytoplasm. It localises to the golgi apparatus. The protein resides in the cytoplasmic vesicle. Its subcellular location is the phagosome. The protein localises to the phagosome membrane. It is found in the cell projection. It localises to the cilium. The protein resides in the cytoskeleton. Its subcellular location is the microtubule organizing center. The protein localises to the centrosome. It is found in the centriole. The catalysed reaction is GTP + H2O = GDP + phosphate + H(+). Regulated by guanine nucleotide exchange factors (GEFs) which promote the exchange of bound GDP for free GTP. Regulated by GTPase activating proteins (GAPs) which increase the GTP hydrolysis activity. Inhibited by GDP dissociation inhibitors (GDIs). Functionally, the small GTPases Rab are key regulators of intracellular membrane trafficking, from the formation of transport vesicles to their fusion with membranes. Rabs cycle between an inactive GDP-bound form and an active GTP-bound form that is able to recruit to membranes different sets of downstream effectors directly responsible for vesicle formation, movement, tethering and fusion. RAB34 transports protein involved in the redistribution of lysosomes to the peri-Golgi region. Plays a role in the maturation of phagosomes that engulf pathogens, such as S.aureus and M.tuberculosis. Plays a role in the fusion of phagosomes with lysosomes. Involved in ciliogenesis. In particular, it is required for early steps of the intracellular cilium assembly pathway initiated by trafficking and docking of ciliary vesicles to the centrioles in the cytoplasm, followed by axoneme formation in the cytoplasm. After axoneme elongation, the centrioles migrate close to the cell surface so that ciliary vesicles can fuse with the plasma membrane to expose cilia to the extracellular space. It seems dispensable for ciliogenesis via the extracellular pathway where cilium assembly begins after migration and docking of the centriole to the plasma membrane. Also acts as a positive regulator of hedgehog signaling and regulates ciliary function. The chain is Ras-related protein Rab-34 from Homo sapiens (Human).